Here is a 387-residue protein sequence, read N- to C-terminus: MFKHLRPVWAEIDLDKLVYNMQQIKNICKGREIIAVVKADAYGHGALDIAPILLENGATRLAVAVLNEAIELRRGGIDAPIMVLGFTPDSLIETSLKYNIEQTVYSYEIAKEISEVAVKSNRVAKIHIALDTGMGRIGFLPDKESIDKIYKLSKLPNIQIEGIFSHFASADEQDKTYTKLQFNKFLWVCNSLEERGIDIKIRHIANSAAIIDMPELHLEGVRPGIIMYGYYPSSEVNKGKLDLKPVMSLKTTIVHIKNMEKGKYISYGREFKTEKESIIATLPVGYADGYSRSLYDKGGKIILKEQLAPLVGRICMDQCMIDVSHIEDVKIGDEVILMGENKGIKMTAEEIGNLLGTINYEVTCMISKRVPRVYIRDGNIVGIRNYV.

Lys38 acts as the Proton acceptor; specific for D-alanine in catalysis. Lys38 bears the N6-(pyridoxal phosphate)lysine mark. Residue Arg136 coordinates substrate. Residue Tyr267 is the Proton acceptor; specific for L-alanine of the active site. Met316 contributes to the substrate binding site.

Belongs to the alanine racemase family. Requires pyridoxal 5'-phosphate as cofactor.

It carries out the reaction L-alanine = D-alanine. It participates in amino-acid biosynthesis; D-alanine biosynthesis; D-alanine from L-alanine: step 1/1. Functionally, catalyzes the interconversion of L-alanine and D-alanine. May also act on other amino acids. The sequence is that of Alanine racemase (alr) from Clostridium tetani (strain Massachusetts / E88).